A 259-amino-acid chain; its full sequence is MELLAKTRKLNALLQSAAGKPVNFREMSDTMCEVIEANVFVVSRRGKLLGYAIHQQIENERMKHMLAERQFPEEYTQSLFNVTETSSNLGVDSDYTAFPVENRELFGQGLTTIVPIVGGGERLGTLVLARLGQEFLDDDLILAEYSSTVVGMEILREKAEEIEEEARSKAVVQMAISSLSYSELEAIEHIFEELNGTEGLLVASKIADRVGITRSVIVNALRKLESAGVIESRSLGMKGTYIKVLNDKFLQELAKLKTN.

The segment at Met-1–Leu-155 is GAF domain. The H-T-H motif DNA-binding region spans Ala-203–Arg-222. Ser-215 is modified (phosphoserine).

Belongs to the CodY family.

Its subcellular location is the cytoplasm. DNA-binding global transcriptional regulator which is involved in the adaptive response to starvation and acts by directly or indirectly controlling the expression of numerous genes in response to nutrient availability. During rapid exponential growth, CodY is highly active and represses genes whose products allow adaptation to nutrient depletion. This Bacillus mycoides (strain KBAB4) (Bacillus weihenstephanensis) protein is Global transcriptional regulator CodY.